The following is a 346-amino-acid chain: Serpentine receptor class beta-11 (346 aa).

7 helical membrane-spanning segments follow: residues 26 to 46, 57 to 77, 102 to 122, 139 to 159, 186 to 206, 239 to 259, and 278 to 298; these read YQMI…LFKL, TIFI…LTTS, IWNF…CSVT, SVVM…CIIF, FTFF…DLIL, VFLI…VVFF, and TFST…SSFF.

The protein belongs to the nematode receptor-like protein srb family.

It localises to the membrane. This Caenorhabditis elegans protein is Serpentine receptor class beta-11 (srb-11).